Reading from the N-terminus, the 193-residue chain is Superoxide dismutase [Fe] (193 aa).

Fe cation-binding residues include histidine 27, histidine 74, aspartate 157, and histidine 161.

Belongs to the iron/manganese superoxide dismutase family. In terms of assembly, monomer. Requires Fe cation as cofactor.

The catalysed reaction is 2 superoxide + 2 H(+) = H2O2 + O2. Functionally, destroys superoxide anion radicals which are normally produced within the cells and which are toxic to biological systems. Involved in the metabolism of 4-aminophenol. May have an indirect role in hydroxyquinol metabolism by scavenging and detoxifying reactive species that promote its auto-oxidation. This Burkholderia sp protein is Superoxide dismutase [Fe].